The following is a 297-amino-acid chain: L-ribulose 3-epimerase (297 aa).

Catalysis depends on Glu-147, which acts as the Proton donor/acceptor. Residue Glu-147 coordinates Mn(2+). Residues Glu-153 and 180–183 contribute to the substrate site; that span reads DTFH. Asp-180 and His-206 together coordinate Mn(2+). Substrate is bound at residue Arg-212. The active-site Proton donor/acceptor is the Glu-241. Residue Glu-241 participates in Mn(2+) binding.

It belongs to the hyi family. In terms of assembly, homotetramer. It depends on Mn(2+) as a cofactor.

The catalysed reaction is L-ribulose = L-xylulose. The enzyme catalyses keto-D-tagatose = keto-D-sorbose. It carries out the reaction D-allulose = keto-D-fructose. With respect to regulation, strongly inhibited by Co(2+) and Ni(2+), and slightly inhibited by EDTA. In terms of biological role, catalyzes the epimerization of various ketoses at the C(3) position. It is able to interconvert L-ribulose with high efficiency. The enzyme can also accept other ketopentoses such as D-psicose and D-tagatose with lower efficiency. The polypeptide is L-ribulose 3-epimerase (Mesorhizobium japonicum (strain LMG 29417 / CECT 9101 / MAFF 303099) (Mesorhizobium loti (strain MAFF 303099))).